We begin with the raw amino-acid sequence, 397 residues long: Gastric triacylglycerol lipase (397 aa).

Positions 1–19 (MWWLLVTVCFIHMSGNAFC) are cleaved as a signal peptide. Asparagine 33 carries N-linked (GlcNAc...) asparagine glycosylation. Residues 77–376 (PVVFLQHGLL…PNYNHLDFIW (300 aa)) enclose the AB hydrolase-1 domain. Serine 171 functions as the Nucleophile in the catalytic mechanism. A disulfide bridge links cysteine 245 with cysteine 254. N-linked (GlcNAc...) asparagine glycans are attached at residues asparagine 270 and asparagine 326. Catalysis depends on charge relay system residues aspartate 342 and histidine 371.

This sequence belongs to the AB hydrolase superfamily. Lipase family.

Its subcellular location is the secreted. The catalysed reaction is a triacylglycerol + H2O = a diacylglycerol + a fatty acid + H(+). It carries out the reaction 1,2,3-tri-(9Z-octadecenoyl)-glycerol + H2O = 1,2-di-(9Z-octadecenoyl)-sn-glycerol + (9Z)-octadecenoate + H(+). The enzyme catalyses 1,2,3-trioctanoylglycerol + H2O = 1,2-dioctanoyl-sn-glycerol + octanoate + H(+). Inhibited by diethylp-nitrophenyl phosphate but not inhibited by thiol reagents 5,5'-dithiobis(2-nitrobenzoic acid) or 4,4'-dithiopyridine. Catalyzes the hydrolysis of triacylglycerols to yield free fatty acids, diacylglycerol, monoacylglycerol, and glycerol. Shows a preferential hydrolysis at the sn-3 position of triacylglycerol. The protein is Gastric triacylglycerol lipase (LIPF) of Bos taurus (Bovine).